A 1536-amino-acid polypeptide reads, in one-letter code: Glycogen debranching enzyme (1536 aa).

Catalysis depends on residues Asp-535, His-538, and Asp-670.

Belongs to the glycogen debranching enzyme family. Interacts with IGD1.

The protein resides in the mitochondrion. Its subcellular location is the cytoplasm. The catalysed reaction is Transfers a segment of a (1-&gt;4)-alpha-D-glucan to a new position in an acceptor, which may be glucose or a (1-&gt;4)-alpha-D-glucan.. The enzyme catalyses Hydrolysis of (1-&gt;6)-alpha-D-glucosidic branch linkages in glycogen phosphorylase limit dextrin.. Activity is inhibited by IGD1. Multifunctional enzyme acting as 1,4-alpha-D-glucan:1,4-alpha-D-glucan 4-alpha-D-glycosyltransferase and amylo-1,6-glucosidase in glycogen degradation. The sequence is that of Glycogen debranching enzyme (GDB1) from Saccharomyces cerevisiae (strain ATCC 204508 / S288c) (Baker's yeast).